We begin with the raw amino-acid sequence, 45 residues long: uncharacterized protein (45 aa).

This is an uncharacterized protein from Saccharomyces cerevisiae (strain ATCC 204508 / S288c) (Baker's yeast).